Consider the following 120-residue polypeptide: MQFEMLYSKIHRAKVSDANLNYVGSITIDKTLAQSANLLAGMKVEIVNINNGERFSTYVIYGDKKGEICLNGAAARKVQIGDIIIIIAYATYTHNELEHYKPTIVQVNESNQILSITNEV.

Serine 25 serves as the catalytic Schiff-base intermediate with substrate; via pyruvic acid. Serine 25 carries the post-translational modification Pyruvic acid (Ser). Position 57 (threonine 57) interacts with substrate. Tyrosine 58 functions as the Proton donor in the catalytic mechanism. Position 72–74 (72–74 (GAA)) interacts with substrate.

It belongs to the PanD family. As to quaternary structure, heterooctamer of four alpha and four beta subunits. Requires pyruvate as cofactor. In terms of processing, is synthesized initially as an inactive proenzyme, which is activated by self-cleavage at a specific serine bond to produce a beta-subunit with a hydroxyl group at its C-terminus and an alpha-subunit with a pyruvoyl group at its N-terminus.

The protein localises to the cytoplasm. The catalysed reaction is L-aspartate + H(+) = beta-alanine + CO2. It functions in the pathway cofactor biosynthesis; (R)-pantothenate biosynthesis; beta-alanine from L-aspartate: step 1/1. Catalyzes the pyruvoyl-dependent decarboxylation of aspartate to produce beta-alanine. The sequence is that of Aspartate 1-decarboxylase from Helicobacter hepaticus (strain ATCC 51449 / 3B1).